Here is a 276-residue protein sequence, read N- to C-terminus: Undecaprenyl-diphosphatase (276 aa).

8 helical membrane passes run 2 to 22 (LEIL…FLPI), 43 to 63 (FIDM…VVLY), 83 to 103 (WTLW…GLPL), 111 to 131 (LMNW…FIVI), 147 to 167 (TLPY…LIPG), 186 to 206 (YVAA…ASLL), 224 to 244 (LILA…IRFL), and 255 to 275 (AFGW…ALLA).

It belongs to the UppP family.

Its subcellular location is the cell membrane. The catalysed reaction is di-trans,octa-cis-undecaprenyl diphosphate + H2O = di-trans,octa-cis-undecaprenyl phosphate + phosphate + H(+). In terms of biological role, catalyzes the dephosphorylation of undecaprenyl diphosphate (UPP). Confers resistance to bacitracin. The protein is Undecaprenyl-diphosphatase of Limosilactobacillus fermentum (strain NBRC 3956 / LMG 18251) (Lactobacillus fermentum).